The chain runs to 878 residues: Alanine--tRNA ligase (878 aa).

Residues His-566, His-570, Cys-668, and His-672 each contribute to the Zn(2+) site.

This sequence belongs to the class-II aminoacyl-tRNA synthetase family. Zn(2+) is required as a cofactor.

The protein localises to the cytoplasm. The enzyme catalyses tRNA(Ala) + L-alanine + ATP = L-alanyl-tRNA(Ala) + AMP + diphosphate. Functionally, catalyzes the attachment of alanine to tRNA(Ala) in a two-step reaction: alanine is first activated by ATP to form Ala-AMP and then transferred to the acceptor end of tRNA(Ala). Also edits incorrectly charged Ser-tRNA(Ala) and Gly-tRNA(Ala) via its editing domain. In Geobacillus thermodenitrificans (strain NG80-2), this protein is Alanine--tRNA ligase.